Here is a 776-residue protein sequence, read N- to C-terminus: Probable E3 ubiquitin-protein ligase HECTD2 (776 aa).

Positions 1–46 (MSEAVRVPSPATPLVVAAPAPEERKGKESEREKLPPIVSAGAGATA) are disordered. Residues 7-20 (VPSPATPLVVAAPA) show a composition bias toward low complexity. The residue at position 9 (serine 9) is a Phosphoserine. Over residues 21-34 (PEERKGKESEREKL) the composition is skewed to basic and acidic residues. Residues 437–776 (KRADLKKKLK…ISNSEGFGLE (340 aa)) enclose the HECT domain. Catalysis depends on cysteine 744, which acts as the Glycyl thioester intermediate.

The catalysed reaction is S-ubiquitinyl-[E2 ubiquitin-conjugating enzyme]-L-cysteine + [acceptor protein]-L-lysine = [E2 ubiquitin-conjugating enzyme]-L-cysteine + N(6)-ubiquitinyl-[acceptor protein]-L-lysine.. The protein operates within protein modification; protein ubiquitination. E3 ubiquitin-protein ligase which accepts ubiquitin from an E2 ubiquitin-conjugating enzyme in the form of a thioester and then directly transfers the ubiquitin to targeted substrates. Its function is as follows. (Microbial infection) Catalyzes ubiquitination of Botulinum neurotoxin A light chain (LC) of C.botulinum neurotoxin type A (BoNT/A). This Homo sapiens (Human) protein is Probable E3 ubiquitin-protein ligase HECTD2.